A 431-amino-acid chain; its full sequence is Glucose-1-phosphate adenylyltransferase (431 aa).

Lys-39 is a beta-D-fructose 1,6-bisphosphate binding site. AMP is bound by residues Arg-40, His-46, and Arg-52. Tyr-114 provides a ligand contact to alpha-D-glucose 1-phosphate. Arg-130 contributes to the AMP binding site. Alpha-D-glucose 1-phosphate contacts are provided by residues Gly-179, 194–195 (EK), and Ser-212. AMP contacts are provided by Glu-370 and Arg-386. Residues 419–423 (REMLR) and 429–431 (QER) contribute to the beta-D-fructose 1,6-bisphosphate site.

This sequence belongs to the bacterial/plant glucose-1-phosphate adenylyltransferase family. In terms of assembly, homotetramer.

It carries out the reaction alpha-D-glucose 1-phosphate + ATP + H(+) = ADP-alpha-D-glucose + diphosphate. It functions in the pathway glycan biosynthesis; glycogen biosynthesis. Allosterically activated by fructose-1,6-bisphosphate (F16BP) and inhibited by AMP. Its function is as follows. Involved in the biosynthesis of ADP-glucose, a building block required for the elongation reactions to produce glycogen. Catalyzes the reaction between ATP and alpha-D-glucose 1-phosphate (G1P) to produce pyrophosphate and ADP-Glc. The polypeptide is Glucose-1-phosphate adenylyltransferase (Escherichia fergusonii (strain ATCC 35469 / DSM 13698 / CCUG 18766 / IAM 14443 / JCM 21226 / LMG 7866 / NBRC 102419 / NCTC 12128 / CDC 0568-73)).